The primary structure comprises 421 residues: Extracellular signal-regulated kinase 1 (421 aa).

The region spanning 70–375 (YQILEIVGEG…VEDALKHPYL (306 aa)) is the Protein kinase domain. Residues 76 to 84 (VGEGAYGIV) and lysine 99 contribute to the ATP site. Aspartate 194 functions as the Proton acceptor in the catalytic mechanism. Threonine 230 carries the post-translational modification Phosphothreonine. Positions 230–232 (TEY) match the TXY motif. Tyrosine 232 is subject to Phosphotyrosine.

Belongs to the protein kinase superfamily. CMGC Ser/Thr protein kinase family. MAP kinase subfamily. Mg(2+) serves as cofactor. In terms of processing, dually phosphorylated on Thr-230 and Tyr-232, which activates the enzyme.

The catalysed reaction is L-seryl-[protein] + ATP = O-phospho-L-seryl-[protein] + ADP + H(+). It catalyses the reaction L-threonyl-[protein] + ATP = O-phospho-L-threonyl-[protein] + ADP + H(+). Its activity is regulated as follows. Activated by tyrosine and threonine phosphorylation. This chain is Extracellular signal-regulated kinase 1 (CEK1), found in Candida albicans (strain SC5314 / ATCC MYA-2876) (Yeast).